The primary structure comprises 296 residues: Lipoyl synthase (296 aa).

Residues Cys37, Cys42, Cys48, Cys63, Cys67, Cys70, and Ser276 each contribute to the [4Fe-4S] cluster site. One can recognise a Radical SAM core domain in the interval 49–265 (WSKKHATMMI…ERVARTKGFL (217 aa)).

Belongs to the radical SAM superfamily. Lipoyl synthase family. [4Fe-4S] cluster serves as cofactor.

Its subcellular location is the cytoplasm. The enzyme catalyses [[Fe-S] cluster scaffold protein carrying a second [4Fe-4S](2+) cluster] + N(6)-octanoyl-L-lysyl-[protein] + 2 oxidized [2Fe-2S]-[ferredoxin] + 2 S-adenosyl-L-methionine + 4 H(+) = [[Fe-S] cluster scaffold protein] + N(6)-[(R)-dihydrolipoyl]-L-lysyl-[protein] + 4 Fe(3+) + 2 hydrogen sulfide + 2 5'-deoxyadenosine + 2 L-methionine + 2 reduced [2Fe-2S]-[ferredoxin]. It participates in protein modification; protein lipoylation via endogenous pathway; protein N(6)-(lipoyl)lysine from octanoyl-[acyl-carrier-protein]: step 2/2. Catalyzes the radical-mediated insertion of two sulfur atoms into the C-6 and C-8 positions of the octanoyl moiety bound to the lipoyl domains of lipoate-dependent enzymes, thereby converting the octanoylated domains into lipoylated derivatives. This chain is Lipoyl synthase, found in Rickettsia canadensis (strain McKiel).